The primary structure comprises 148 residues: HTH-type transcriptional regulator BilQ (148 aa).

Residues Met-1–Asp-140 form the HTH marR-type domain. A DNA-binding region (H-T-H motif) is located at residues Leu-54–Gln-77.

Functionally, transcription regulator that regulates expression of the bilirubin reductase operon (bilQ, bilR and bilS). This Clostridioides difficile (strain CD3) protein is HTH-type transcriptional regulator BilQ.